The primary structure comprises 381 residues: Sensor histidine kinase FlgS (381 aa).

One can recognise a Histidine kinase domain in the interval 177–381 (HLAHEIRNPV…TFEIKILNAS (205 aa)). Position 180 is a phosphohistidine; by autocatalysis (histidine 180).

As to quaternary structure, interacts (via its C-terminal kinase domain) with FlhA (via N-terminus). Autophosphorylated.

It carries out the reaction ATP + protein L-histidine = ADP + protein N-phospho-L-histidine.. Its function is as follows. Member of the two-component regulatory system FlgR/FlgS that induces the transcriptional induction of the genes needed in motility and flagellar biogenesis. Also plays an essential role in bacterial survival at pH 2.5 independently of FlgR. Functions as a sensor protein kinase which is autophosphorylated at a histidine residue and transfers its phosphate group to the conserved aspartic acid residue in the regulatory domain of FlgR. In turn, FlgR functions as a transcriptional regulator initiating transcription from RpoN-dependent promoters. This chain is Sensor histidine kinase FlgS (flgS), found in Helicobacter pylori (strain ATCC 700392 / 26695) (Campylobacter pylori).